We begin with the raw amino-acid sequence, 131 residues long: Ribonuclease VapC3 (131 aa).

The PINc domain occupies 4 to 121; sequence VVDASAIAAL…GKLLTLDRQL (118 aa). Mg(2+) is bound by residues D6, D100, and D118.

It belongs to the PINc/VapC protein family. In terms of assembly, homodimer. Forms a complex with putative antitoxin VapB3, possibly VapB(2)-VapC(2). Requires Mg(2+) as cofactor.

With respect to regulation, inhibited by EDTA. In terms of biological role, toxic component of a type II toxin-antitoxin (TA) system. Has ribonuclease activity. This Pyrobaculum aerophilum (strain ATCC 51768 / DSM 7523 / JCM 9630 / CIP 104966 / NBRC 100827 / IM2) protein is Ribonuclease VapC3.